Consider the following 285-residue polypeptide: Acetylglutamate kinase (285 aa).

Residues 63–64 (GG), Arg85, and Asn178 contribute to the substrate site.

It belongs to the acetylglutamate kinase family. ArgB subfamily.

It is found in the cytoplasm. It catalyses the reaction N-acetyl-L-glutamate + ATP = N-acetyl-L-glutamyl 5-phosphate + ADP. It participates in amino-acid biosynthesis; L-arginine biosynthesis; N(2)-acetyl-L-ornithine from L-glutamate: step 2/4. Functionally, catalyzes the ATP-dependent phosphorylation of N-acetyl-L-glutamate. The polypeptide is Acetylglutamate kinase (Synechococcus sp. (strain CC9311)).